We begin with the raw amino-acid sequence, 33 residues long: U23-ctenitoxin-Pn1a (33 aa).

3 disulfide bridges follow: cysteine 3/cysteine 16, cysteine 10/cysteine 21, and cysteine 15/cysteine 30.

Expressed by the venom gland.

Its subcellular location is the secreted. Its function is as follows. Non-toxic to mice. The chain is U23-ctenitoxin-Pn1a from Phoneutria nigriventer (Brazilian armed spider).